The sequence spans 475 residues: Glycogen synthase (475 aa).

Lysine 15 is a binding site for ADP-alpha-D-glucose.

It belongs to the glycosyltransferase 1 family. Bacterial/plant glycogen synthase subfamily.

It catalyses the reaction [(1-&gt;4)-alpha-D-glucosyl](n) + ADP-alpha-D-glucose = [(1-&gt;4)-alpha-D-glucosyl](n+1) + ADP + H(+). It functions in the pathway glycan biosynthesis; glycogen biosynthesis. Its function is as follows. Synthesizes alpha-1,4-glucan chains using ADP-glucose. In Kosmotoga olearia (strain ATCC BAA-1733 / DSM 21960 / TBF 19.5.1), this protein is Glycogen synthase.